Reading from the N-terminus, the 418-residue chain is Argininosuccinate synthase (418 aa).

Residues 14–22 (AYSGGLDTS) and Ala42 each bind ATP. L-citrulline-binding residues include Tyr94 and Ser99. Residue Gly124 coordinates ATP. Residues Thr126, Asn130, and Asp131 each contribute to the L-aspartate site. Asn130 lines the L-citrulline pocket. 5 residues coordinate L-citrulline: Arg134, Ser183, Ser192, Glu273, and Tyr285.

This sequence belongs to the argininosuccinate synthase family. Type 1 subfamily. In terms of assembly, homotetramer.

The protein localises to the cytoplasm. It catalyses the reaction L-citrulline + L-aspartate + ATP = 2-(N(omega)-L-arginino)succinate + AMP + diphosphate + H(+). It participates in amino-acid biosynthesis; L-arginine biosynthesis; L-arginine from L-ornithine and carbamoyl phosphate: step 2/3. The chain is Argininosuccinate synthase from Colwellia psychrerythraea (strain 34H / ATCC BAA-681) (Vibrio psychroerythus).